The primary structure comprises 336 residues: DNA-directed RNA polymerase subunit alpha (336 aa).

Positions 1 to 226 are alpha N-terminal domain (alpha-NTD); sequence MLIAQRPTLS…ELFGLARELN (226 aa). Positions 241-336 are alpha C-terminal domain (alpha-CTD); it reads AALAADMALP…DDAAFSDDEL (96 aa).

Belongs to the RNA polymerase alpha chain family. As to quaternary structure, homodimer. The RNAP catalytic core consists of 2 alpha, 1 beta, 1 beta' and 1 omega subunit. When a sigma factor is associated with the core the holoenzyme is formed, which can initiate transcription.

The catalysed reaction is RNA(n) + a ribonucleoside 5'-triphosphate = RNA(n+1) + diphosphate. Functionally, DNA-dependent RNA polymerase catalyzes the transcription of DNA into RNA using the four ribonucleoside triphosphates as substrates. This Arthrobacter sp. (strain FB24) protein is DNA-directed RNA polymerase subunit alpha.